Here is a 171-residue protein sequence, read N- to C-terminus: Cation channel sperm-associated auxiliary subunit TMEM249 (171 aa).

Over methionine 1–leucine 2 the chain is Cytoplasmic. Residues phenylalanine 3–glutamate 17 form a helical membrane-spanning segment. Topologically, residues valine 18–alanine 28 are extracellular. The chain crosses the membrane as a helical span at residues tyrosine 29–serine 40. At serine 41 to valine 171 the chain is on the cytoplasmic side.

As to quaternary structure, component of the CatSper complex or CatSpermasome composed of the core pore-forming members CATSPER1, CATSPER2, CATSPER3 and CATSPER4 as well as auxiliary members CATSPERB, CATSPERG2, CATSPERD, CATSPERE, CATSPERZ, C2CD6/CATSPERT, SLCO6C1, TMEM249, TMEM262 and EFCAB9. HSPA1 may be an additional auxiliary complex member. The core complex members CATSPER1, CATSPER2, CATSPER3 and CATSPER4 form a heterotetrameric channel. The auxiliary CATSPERB, CATSPERG2, CATSPERD and CATSPERE subunits form a pavilion-like structure over the pore which stabilizes the complex through interactions with CATSPER4, CATSPER3, CATSPER1 and CATSPER2 respectively. SLCO6C1 interacts with CATSPERE and TMEM262/CATSPERH interacts with CATSPERB, further stabilizing the complex. C2CD6/CATSPERT interacts at least with CATSPERD and is required for targeting the CatSper complex in the flagellar membrane.

It localises to the cell projection. Its subcellular location is the cilium. The protein resides in the flagellum membrane. Auxiliary component of the CatSper complex, a complex involved in sperm cell hyperactivation. The protein is Cation channel sperm-associated auxiliary subunit TMEM249 of Mus musculus (Mouse).